The following is a 165-amino-acid chain: 3-hydroxyacyl-[acyl-carrier-protein] dehydratase FabZ (165 aa).

Residue histidine 68 is part of the active site.

This sequence belongs to the thioester dehydratase family. FabZ subfamily.

It localises to the cytoplasm. It catalyses the reaction a (3R)-hydroxyacyl-[ACP] = a (2E)-enoyl-[ACP] + H2O. Functionally, involved in unsaturated fatty acids biosynthesis. Catalyzes the dehydration of short chain beta-hydroxyacyl-ACPs and long chain saturated and unsaturated beta-hydroxyacyl-ACPs. This Methylobacterium sp. (strain 4-46) protein is 3-hydroxyacyl-[acyl-carrier-protein] dehydratase FabZ.